The sequence spans 908 residues: MATIHVDGKEYEVNGADNLLQACLSLGLDIPYFCWHPALGSVGACRQCAVKQYQNAEDTRGRLVMSCMTPATDGTFISIDDEEAKQFRESVVEWLMTNHPHDCPVCEEGGNCHLQDMTVMTGHSFRRYRFTKRTHRNQDLGPFISHEMNRCIACYRCVRYYKDYADGTDLGVYGAHDNVYFGRPEDGTLESEFSGNLVEICPTGVFTDKTHSERYNRKWDMQFAPSICQQCSIGCNISPGERYGELRRIENRYNGTVNHYFLCDRGRFGYGYVNLKDRPRQPVQRRGDDFITLNAEQAMQGAADILRQSKKVIGIGSPRASIESNFALRELVGAENFYTGIARGEQERLQLALKVLREGGIYTPALREIESYDAVLVLGEDVTQTGARVALAVRQAVKGKAREMAAAQKVADWQIAAILNIGQRAKHPLFVTNVDDTRLDDIAAWTYRAPVEDQARLGFAIAHALDNTAPAVDGIDSDLQNKIDVIVQALAGAKKPLIISGTNAGSSEVIQAAANVAKALKGRGADVGITMIARSVNSMGLGMMGGGSLDDALGELETGSADAVVVLENDLHRHASATRVNAALAKAPLVMVVDHQRTAIMENAHLVLSAASFAESDGTVINNEGRAQRFFQVYDPAYYDNKTIMLESWRWLHSLHSTVENREVDWTQLDHVIDAVIAAMPQFAGIKDAAPDATFRIRGQKLAREPHRYSGRTAMRANISVHEPRQPQDKDTMFAFSMEGNNQPTAPRSEIPFAWAPGWNSPQAWNKFQDEVGGKLRHGDPGVRLIEATEGGLDYFTTVPASFQAQDGQWRIAPYYHLFGSDELSQRSPVFQSRMPQPYIKLNPADAAKLGVNAGTRVSFSYDGNTVTLPVEISEGLAAGQVGLPMGMPGIAPVLAGARLEDLREAQQ.

The 82-residue stretch at 2–83 (ATIHVDGKEY…GTFISIDDEE (82 aa)) folds into the 2Fe-2S ferredoxin-type domain. [2Fe-2S] cluster contacts are provided by Cys34, Cys45, Cys48, and Cys67. The 4Fe-4S His(Cys)3-ligated-type domain occupies 83-122 (EAKQFRESVVEWLMTNHPHDCPVCEEGGNCHLQDMTVMTG). Residues His99, Cys103, Cys106, Cys112, Cys151, Cys154, Cys157, Cys201, Cys228, Cys231, Cys235, and Cys263 each coordinate [4Fe-4S] cluster. The region spanning 221-277 (MQFAPSICQQCSIGCNISPGERYGELRRIENRYNGTVNHYFLCDRGRFGYGYVNLKD) is the 4Fe-4S Mo/W bis-MGD-type domain.

The protein belongs to the complex I 75 kDa subunit family. As to quaternary structure, composed of 13 different subunits. Subunits NuoCD, E, F, and G constitute the peripheral sector of the complex. It depends on [2Fe-2S] cluster as a cofactor. [4Fe-4S] cluster serves as cofactor.

It carries out the reaction a quinone + NADH + 5 H(+)(in) = a quinol + NAD(+) + 4 H(+)(out). NDH-1 shuttles electrons from NADH, via FMN and iron-sulfur (Fe-S) centers, to quinones in the respiratory chain. The immediate electron acceptor for the enzyme in this species is believed to be ubiquinone. Couples the redox reaction to proton translocation (for every two electrons transferred, four hydrogen ions are translocated across the cytoplasmic membrane), and thus conserves the redox energy in a proton gradient. In Salmonella typhi, this protein is NADH-quinone oxidoreductase subunit G (nuoG).